A 386-amino-acid polypeptide reads, in one-letter code: NADPH-dependent alkenal/one oxidoreductase, chloroplastic (386 aa).

It belongs to the zinc-containing alcohol dehydrogenase family. Quinone oxidoreductase subfamily.

The protein resides in the plastid. Its subcellular location is the chloroplast. Functionally, reduces the double bond in short-chain unsaturated carbonyls. Acts preferentially on alpha,beta-unsaturated ketones rather on alpha,beta-unsaturated aldehydes. Has no activity with (E)-2-hexenal and (E)-2-pentenal. Contributes to detoxify stromal reactive carbonyls produced under oxidative stress. This Arabidopsis thaliana (Mouse-ear cress) protein is NADPH-dependent alkenal/one oxidoreductase, chloroplastic.